Here is a 505-residue protein sequence, read N- to C-terminus: ATP nucleosidase Cap17 (505 aa).

The interval 1 to 229 (MTNTNNEYVL…RLSEIAVELL (229 aa)) is cyclic oligonucleotide sensing-domain. A purine nucleoside phosphorylase domain region spans residues 239 to 505 (LHTPSVLILT…DYLQHGWIRA (267 aa)).

This sequence belongs to the Cap17 family.

It carries out the reaction ATP + H2O = D-ribose 5-triphosphate + adenine. It catalyses the reaction dATP + H2O = 2-deoxyribose 5-triphosphate + adenine. Effector protein with (d)ATP degrading activity of a CBASS antivirus system. CBASS (cyclic oligonucleotide-based antiphage signaling system) provides immunity against bacteriophage. A CD-NTase protein synthesizes cyclic nucleotides in response to infection; these serve as specific second messenger signals. The signals activate a diverse range of effectors, leading to bacterial cell death and thus abortive phage infection. A type III CBASS system. Expression of this CBASS system (Cap18-Cap6-Cap7-CdnC-CapW-Cap17) in a susceptible E.coli (strain MG1655) confers resistance to bacteriophage P1, leading to cell lysis. By 50 minutes post-infection, ATP levels are markedly reduced while dATP has been eliminated. The C-terminal purine nucleoside phosphorylase (PNP) domain cleaves the N-glycosidic bond of (d)ATP to release adenine and a sugar triphosphate; has no activity on other (d)NTPs, nor on DNA or RNA. In vivo during phage infection has pleoitropic effects on nucleotide accumulation. This protein may be activated by the cognate CD-NTase (CdnC). The protein is ATP nucleosidase Cap17 of Escherichia coli (strain KTE188).